Consider the following 259-residue polypeptide: HTH-type transcriptional regulator Rv1931c (259 aa).

Residues 104–121 (SHRRHRPRAGTGRRRPRH) show a composition bias toward basic residues. The segment at 104–170 (SHRRHRPRAG…GAGGHRGRAG (67 aa)) is disordered. Positions 174-257 (RIGELAQRAA…GISPDQYRKA (84 aa)) constitute an HTH araC/xylS-type domain. 2 consecutive DNA-binding regions (H-T-H motif) follow at residues 176-197 (GELA…SDEV) and 224-247 (VVAI…IRRV).

In terms of biological role, controls the expression of genes important for virulence. The protein is HTH-type transcriptional regulator Rv1931c of Mycobacterium tuberculosis (strain ATCC 25618 / H37Rv).